The following is a 100-amino-acid chain: Enhancer of yellow 2 transcription factor (100 aa).

The protein belongs to the ENY2 family. Component of the nuclear pore complex (NPC)-associated AMEX complex (anchoring and mRNA export complex), composed of at least e(y)2 and xmas-2. Component of the SAGA transcription coactivator-HAT complexes, at least composed of Ada2b, e(y)2, Pcaf/Gcn5, Taf10 and Nipped-A/Trrap. Within the SAGA complex, e(y)2, Sgf11, and not/nonstop form an additional subcomplex of SAGA called the DUB module (deubiquitination module). Component of the THO complex, composed of at least e(y)2, HPR1, THO2, THOC5, THOC6 and THOC7. Interacts with e(y)1. Interacts with su(Hw) (via zinc fingers). Interacts with xmas-2; required for localization to the nuclear periphery. Interacts with the nuclear pore complex (NPC).

It is found in the nucleus. The protein localises to the nucleoplasm. The protein resides in the cytoplasm. In terms of biological role, involved in mRNA export coupled transcription activation by association with both the AMEX and the SAGA complexes. The SAGA complex is a multiprotein complex that activates transcription by remodeling chromatin and mediating histone acetylation and deubiquitination. Within the SAGA complex, participates in a subcomplex that specifically deubiquitinates histone H2B. The SAGA complex is recruited to specific gene promoters by activators, where it is required for transcription. Required for nuclear receptor-mediated transactivation. Involved in transcription elongation by recruiting the THO complex onto nascent mRNA. The AMEX complex functions in docking export-competent ribonucleoprotein particles (mRNPs) to the nuclear entrance of the nuclear pore complex (nuclear basket). AMEX participates in mRNA export and accurate chromatin positioning in the nucleus by tethering genes to the nuclear periphery. This chain is Enhancer of yellow 2 transcription factor, found in Drosophila ananassae (Fruit fly).